Reading from the N-terminus, the 515-residue chain is MDEFHRCGKEDSFWQQCFLYPLFFQEDLYAISHDHYLDVSSSSRPMEHLSSNDQLSFLTVKRLIGQIRQQNHSIVLFVNCDPNPLADRKKSFYSESVLEALTLVLEVPFSIWSKSSVEGMNECKSFRSIHSIFPFLEDKFPHSNSILDARIPYSIHPEILVRTFRRWIRDAPSLHPLRSVLYDYRNSPENLQRSIIVVPRVNTRFFLFLLNYYVCECESILFSRLKRSSHSRSLSHGSFPQRTHFHRKIKHIIIFSRRNSLKSIWSLKDPKIHYVRYGERPIIAIKGADLLVKKCRYYLLIFRQFYFHLWSEPYRVCSHQLSKNCSSSPGYFLRVRMNPLLVRTKTLDELFIPVLITNEMDPIVPIVPIIGLLATEKFCDISGRPISKLSWTSLTDDDILDRFDQIWRNLFHYYSGSFDRDGLYRIKYILLLSCAKTLACKHKSTIRVVRKELGPELFKKSFSKEREFDSLPFSSKAAARSQRERIWHSDIPQINPLANSWQKIQDLKIENLFDQ.

The protein belongs to the intron maturase 2 family. MatK subfamily.

Its subcellular location is the plastid. It is found in the chloroplast. Its function is as follows. Usually encoded in the trnK tRNA gene intron. Probably assists in splicing its own and other chloroplast group II introns. This Pinus luchuensis (Ryukyu island pine) protein is Maturase K.